The chain runs to 75 residues: SPbeta prophage-derived uncharacterized protein YorX (75 aa).

The protein is SPbeta prophage-derived uncharacterized protein YorX (yorX) of Bacillus subtilis (strain 168).